A 376-amino-acid polypeptide reads, in one-letter code: Alcohol dehydrogenase class-3 (376 aa).

Positions 47, 69, 99, 102, 105, 113, and 176 each coordinate Zn(2+).

This sequence belongs to the zinc-containing alcohol dehydrogenase family. Class-III subfamily. In terms of assembly, homodimer. The cofactor is Zn(2+). In terms of tissue distribution, expressed in the skeletal muscle, heart, gill filaments and liver, with highest levels in the kidney.

The protein resides in the cytoplasm. The enzyme catalyses a primary alcohol + NAD(+) = an aldehyde + NADH + H(+). The catalysed reaction is a secondary alcohol + NAD(+) = a ketone + NADH + H(+). It catalyses the reaction S-(hydroxymethyl)glutathione + NADP(+) = S-formylglutathione + NADPH + H(+). It carries out the reaction S-(hydroxymethyl)glutathione + NAD(+) = S-formylglutathione + NADH + H(+). The enzyme catalyses S-nitrosoglutathione + NADH + H(+) = S-(hydroxysulfenamide)glutathione + NAD(+). In terms of biological role, class-III ADH is remarkably ineffective in oxidizing ethanol, but it readily catalyzes the oxidation of long-chain primary alcohols and the oxidation of S-(hydroxymethyl) glutathione. Also acts as a S-nitroso-glutathione reductase by catalyzing the NADH-dependent reduction of S-nitrosoglutathione, thereby regulating protein S-nitrosylation. This Sparus aurata (Gilthead sea bream) protein is Alcohol dehydrogenase class-3.